We begin with the raw amino-acid sequence, 347 residues long: tRNA pseudouridine synthase D (347 aa).

Aspartate 81 acts as the Nucleophile in catalysis. Residues 158 to 305 (GVPNYFGSQR…RHDRRDIALK (148 aa)) enclose the TRUD domain.

It belongs to the pseudouridine synthase TruD family.

The enzyme catalyses uridine(13) in tRNA = pseudouridine(13) in tRNA. In terms of biological role, responsible for synthesis of pseudouridine from uracil-13 in transfer RNAs. This is tRNA pseudouridine synthase D from Vibrio campbellii (strain ATCC BAA-1116).